Consider the following 3344-residue polypeptide: MSSLYTLRAAAQYDRRLESKKGSGWVEHKLERKGERGNTHYCSEFDISKGAKILQLVQIGNTEVGRTFLEGNRFVRANIFEIIRKTMVGRLGYDFESELWVCRNCDKTSEKYFKKCDCGETYYYSERNLMRTMNDLMYQFDMTPSEINSVDLEYLANAVDYAEQLVKRSQVPEPVELAMMEPIVASGEGILMVSEPEVMPVTTKVEEAWTIQIGEIPVPLVVIKETPVISGVEGTLNSTGFSLEADITKLVEKEILQEEVKEAVHLALEVGNEIAEKKPELKLIPYWSASLELHKRIRKHKEHAKIAAIQVQKEREKDQKVFSALELRLNLKSRRRNQAVVCDKRGTLKWETQRGHKKSKLMQQASDFVVTQIHCDFGCKTQYSEPHIPGIKQSTSKKICKPRKHSRIVGNSKINYIMKNLCDTIIERGIPVELVTKRCKRRILQKEGRSYVQLRHMNGIRARQDVSSSPDMELLFTQFCKFLVGHKPLKSKNLTFGSSGLIFKPKFADNVGRYFGDYFVVRGRLGGKLFDGRSKLARSVYAKMDQYNDVAEKFWLGFNRAFLRHRKPTDHTCTSDMDVTMCGEVAALATIILFPCHKITCNTCMSKVKGRVIDEVGEDLNCELERLRETLSAYGGSFGHVSTLLDQLNRVLNARNMNDGAFKEIAKKIDEKKESPWTHMTTINNTLYKGSLATGYEFERASNSLREIVRWHLKRTESIKAGSVESFRNKRSGKAHFNPALTCDNQLDKNGNFLWGERQYHAKRFFANYFEKIDHSKGYEYYSQRQNPNGIRKIAIGNLVFSTNLERFRQQMVEHHIDQGPITRECIALRNNNYVHVCSCVTLDDGTPATSELKTPTKNHIVLGNSGDPKYVDLPTLESDSMYIAKKGYCYMNIFLAMLINIPENEAKDFTKRVRDLVGSKLGEWPTMLDVATCANQLVVFHPDAANAELPQILVDHRQKTMHVIDSFGSVDSGYHILKANTVNQLIQFARDPLDSEMKHYIVGGEFDPTTNCLHQLIRVIYKPHELRSLLRNEPYLIVIALMSPSVLLTLFNSGAVEHALNYWIKRDQDVVEVIVLVEQLCRKVTLARTILEQFNEIRQNARDLHELMDRNNKPWISYDRSLELLSVYANSQLTDEGLLKQGFSTLDPRLREAVEKTYATLLQEEWRALSLFQKLHLRYFAFKSQPSFSEYLKPKGRADLKIVYDFSPKYCVHEVGKAFLLPVKAGAKIASRIINGCGAFIRKSAAKGCAYIFKDLFQFVHVVLVLSILLQIFRSAQGIATEHLQLKQAKAEVERQKDFDRLEALYAELCVKSGEQPTTEEFLDFVMEREPRLKDQAYNLIYIPVIHQAKSDNEKKLEQVIAFITLILMMIDVDKSDCVYRILNKFKGVINSSNTNVYHQSLDDIRDFYEDKQLTIDFDITGENQINRGPIDVTFEKWWDNQLSNNNTIGHYRIGGTFVEFSRVNAATVASEIAHSPEREFLVRGAVGSGKSTNLPFLLSKHGSVLLIEPTRPLCENVCKQLRGEPFHCNPTIRMRGLTAFGSTNITIMTSGFALHYYAHNIQQLRLFDFIIFDECHVIDSQAMAFYCLMEGNAIEKKILKVSATPPGREVEFSTQFPTKIVTEQSISFKQLVDNFGTGANSDVTAFADNILVYVASYNEVDQLSKLLSDKGYLVTKIDGRTMKVGKTEISTSGTKFKKHFIVATNIIENGVTLDIEAVIDFGMKVVPEMDSDNRMIRYSKQAISFGERIQRLGRVGRHKEGIALRIGHTEKGIQEIPEMAATEAAFLSFTYGLPVMTHNVGLSLLKNCTVRQARTMQQYELSPFFTQNLVNFDGTVHPKIDVLLRPYKLRDCEVRLSEAAIPHGVQSIWLSARDYEAVGGRLCLEGDVRIPFLIKDVPERLYKELWDIVQTYKRDFTFGRINSVSAGKIAYTLRTDVYSIPRTLITIDKLIESENMKHAHFKAMTSCTGLNSSFSLLGVINTIQSRYLVDHSVENIRKLQLAKAQIQQLEAHMQENNVENLIQSLGAVRAVYHQSVDGFKHIKRELGLKGVWDGSLMIKDAIVCGFTMAGGAMLLYQHFRDKFTNVHVFHQGFSARQRQKLRFKSAANAKLGREVYGDDGTIEHYFGEAYTKKGNKKGKMHGMGVKTRKFVATYGFKPEDYSYVRYLDPLTGETLDESPQTDISMVQDHFSDIRRKYMDSDSFDRQALIANNTIKAYYVRNSAKAALEVDLTPHNPLKVCDNKLTIAGFPDREAELRQTGPPRTIQVDQVPPPSKSVHHEGKSLCQGMRNYNGIASVVCHLKNTSGKGKSLFGIGYNSFIITNRHLFKENNGELIVKSQHGKFIVKNTTTLQIAPVGKTDLLIIRMPKDFPPFHSRARFRAMKAGDKVCMIGVDYQENHIASKVSETSIISEGTGDFGCHWISTNDGDCGNPLVSVSDGFIVGLHSLSTSTGDQNFFAKIPAQFEEKVLRKIDDLTWSKHWSYNINELSWGALKVWESRPEAIFNAQKEVNQLNVFEQSGGRWLFDKLHGNLKGVSSAPSNLVTKHVVKGICPLFRNYLECDEEAKAFFSPLMGHYMKSVLSKEAYIKDLLKYSSDIVVGEVNHDVFEDSVAQVIELLNDHECPELEYITDSEVIIQALNMDAAVGALYTGKKRKYFEGSTVEHRQALVRKSCERLYEGRMGVWNGSLKAELRPAEKVLAKKTRSFTAAPLDTLLGAKVCVDDFNNWFYSKNMECPWTVGMTKFYKGWDEFLKKFPDGWVYCDADGSQFDSSLTPYLLNAVLSIRLWAMEDWDIGEQMLKNLYGEITYTPILTPDGTIVKKFKGNNSGQPSTVVDNTLMVLITMYYALRKAGYDTKTQEDMCVFYINGDDLCIAIHPDHEHVLDSFSSSFAELGLKYDFAQRHRNKQNLWFMSHRGILIDDIYIPKLEPERIVAILEWDKSKLPEHRLEAITAAMIESWGYGDLTHQIRRFYQWVLEQAPFNELAKQGRAPYVSEVGLRRLYTSERGSMDELEAYIDKYFERERGDSPELLVYHESRGTDDYQLVCSNNTHVFHQSKNEAVDAGLNEKLKEKEKQKEKEKEKQKEKEKDGASDGNDVSTSTKTGERDRDVNVGTSGTFTVPRIKSFTDKMVLPRIKGKTVLNLNHLLQYNPQQIDISNTRATHSQFEKWYEGVRNDYGLNDNEMQVMLNGLMVWCIENGTSPDISGVWVMMDGETQVDYPIKPLIEHATPSFRQIMAHFSNAAEAYIAKRNATERYMPRYGIKRNLTDISLARYAFDFYEVNSKTPDRAREAHMQMKAAALRNTSRRMFGMDGSVSNKEENTERHTVEDVNRDMHSLLGMRN.

A Peptidase S30 domain is found at 408–547 (IVGNSKINYI…RSVYAKMDQY (140 aa)). Catalysis depends on for P1 proteinase activity residues histidine 456, aspartate 465, and serine 499. The Involved in interaction with stylet and aphid transmission motif lies at 598–601 (KITC). Positions 856–858 (PTK) match the Involved in virions binding and aphid transmission motif. The Peptidase C6 domain occupies 882 to 1004 (MYIAKKGYCY…DSEMKHYIVG (123 aa)). Active-site for helper component proteinase activity residues include cysteine 890 and histidine 963. Positions 1473–1625 (EIAHSPEREF…TQFPTKIVTE (153 aa)) constitute a Helicase ATP-binding domain. 1486 to 1493 (GAVGSGKS) contributes to the ATP binding site. The DECH box signature appears at 1575–1578 (DECH). The Helicase C-terminal domain maps to 1644 to 1803 (DVTAFADNIL…GLPVMTHNVG (160 aa)). The Nuclear localization signal motif lies at 2134 to 2141 (KKGNKKGK). Tyrosine 2156 carries the post-translational modification O-(5'-phospho-RNA)-tyrosine. A Peptidase C4 domain is found at 2283 to 2499 (GKSLCQGMRN…LSWGALKVWE (217 aa)). Active-site for nuclear inclusion protein A activity residues include histidine 2327, aspartate 2362, and cysteine 2431. In terms of domain architecture, RdRp catalytic spans 2761–2885 (WVYCDADGSQ…AIHPDHEHVL (125 aa)). Positions 3059–3093 (KNEAVDAGLNEKLKEKEKQKEKEKEKQKEKEKDGA) are enriched in basic and acidic residues. The interval 3059 to 3116 (KNEAVDAGLNEKLKEKEKQKEKEKEKQKEKEKDGASDGNDVSTSTKTGERDRDVNVGT) is disordered.

It belongs to the potyviridae genome polyprotein family. As to quaternary structure, interacts with host eIF4E protein (via cap-binding region); this interaction mediates the translation of the VPg-viral RNA conjugates. Part of a complex that comprises VPg, RNA, host EIF4E and EIF4G; this interaction mediates the translation of the VPg-viral RNA conjugates. In terms of processing, VPg is uridylylated by the polymerase and is covalently attached to the 5'-end of the genomic RNA. This uridylylated form acts as a nucleotide-peptide primer for the polymerase. Post-translationally, potyviral RNA is expressed as two polyproteins which undergo post-translational proteolytic processing. Genome polyprotein is processed by NIa-pro, P1 and HC-pro proteinases resulting in the production of at least ten individual proteins. P3N-PIPO polyprotein is cleaved by P1 and HC-pro proteinases resulting in the production of three individual proteins. The P1 proteinase and the HC-pro cleave only their respective C-termini autocatalytically. 6K1 is essential for proper proteolytic separation of P3 from CI.

The protein resides in the host cytoplasmic vesicle. Its subcellular location is the host nucleus. The protein localises to the virion. It catalyses the reaction RNA(n) + a ribonucleoside 5'-triphosphate = RNA(n+1) + diphosphate. The enzyme catalyses Hydrolyzes glutaminyl bonds, and activity is further restricted by preferences for the amino acids in P6 - P1' that vary with the species of potyvirus, e.g. Glu-Xaa-Xaa-Tyr-Xaa-Gln-|-(Ser or Gly) for the enzyme from tobacco etch virus. The natural substrate is the viral polyprotein, but other proteins and oligopeptides containing the appropriate consensus sequence are also cleaved.. The catalysed reaction is Hydrolyzes a Gly-|-Gly bond at its own C-terminus, commonly in the sequence -Tyr-Xaa-Val-Gly-|-Gly, in the processing of the potyviral polyprotein.. Functionally, required for aphid transmission and also has proteolytic activity. Only cleaves a Gly-Gly dipeptide at its own C-terminus. Interacts with virions and aphid stylets. Acts as a suppressor of RNA-mediated gene silencing, also known as post-transcriptional gene silencing (PTGS), a mechanism of plant viral defense that limits the accumulation of viral RNAs. May have RNA-binding activity. In terms of biological role, has helicase activity. It may be involved in replication. Its function is as follows. Indispensable for virus replication. Mediates the cap-independent, EIF4E-dependent translation of viral genomic RNAs. Binds to the cap-binding site of host EIF4E and thus interferes with the host EIF4E-dependent mRNA export and translation. VPg-RNA directly binds EIF4E and is a template for transcription. Also forms trimeric complexes with EIF4E-EIF4G, which are templates for translation. Functionally, has RNA-binding and proteolytic activities. In terms of biological role, an RNA-dependent RNA polymerase that plays an essential role in the virus replication. Its function is as follows. Involved in aphid transmission, cell-to-cell and systemis movement, encapsidation of the viral RNA and in the regulation of viral RNA amplification. This chain is Genome polyprotein, found in Carica papaya (Papaya).